The chain runs to 1316 residues: DNA-directed RNA polymerase subunit beta' (1316 aa).

4 residues coordinate Zn(2+): C60, C62, C75, and C78. Mg(2+) is bound by residues D535, D537, and D539. Zn(2+) is bound by residues C891, C968, C975, and C978.

Belongs to the RNA polymerase beta' chain family. As to quaternary structure, the RNAP catalytic core consists of 2 alpha, 1 beta, 1 beta' and 1 omega subunit. When a sigma factor is associated with the core the holoenzyme is formed, which can initiate transcription. Requires Mg(2+) as cofactor. It depends on Zn(2+) as a cofactor.

The enzyme catalyses RNA(n) + a ribonucleoside 5'-triphosphate = RNA(n+1) + diphosphate. Its function is as follows. DNA-dependent RNA polymerase catalyzes the transcription of DNA into RNA using the four ribonucleoside triphosphates as substrates. The protein is DNA-directed RNA polymerase subunit beta' of Mycobacterium tuberculosis (strain ATCC 25177 / H37Ra).